We begin with the raw amino-acid sequence, 706 residues long: D-(-)-3-hydroxybutyrate oligomer hydrolase (706 aa).

The signal sequence occupies residues 1-27 (MTIIIAGKNTLTLTSLAAAVLALGACG). S311 serves as the catalytic Charge relay system.

The protein belongs to the D-(-)-3-hydroxybutyrate oligomer hydrolase family.

The protein resides in the secreted. It catalyses the reaction (3R)-hydroxybutanoate dimer + H2O = 2 (R)-3-hydroxybutanoate + H(+). It functions in the pathway lipid metabolism; butanoate metabolism. Its function is as follows. Participates in the degradation of poly-3-hydroxybutyrate (PHB). It works downstream of poly(3-hydroxybutyrate) depolymerase, hydrolyzing D(-)-3-hydroxybutyrate oligomers of various length (3HB-oligomers) into 3HB-monomers. This Polaromonas naphthalenivorans (strain CJ2) protein is D-(-)-3-hydroxybutyrate oligomer hydrolase.